Here is a 318-residue protein sequence, read N- to C-terminus: Transaldolase (318 aa).

The Schiff-base intermediate with substrate role is filled by lysine 132.

The protein belongs to the transaldolase family. Type 1 subfamily. As to quaternary structure, homodimer.

The protein resides in the cytoplasm. It catalyses the reaction D-sedoheptulose 7-phosphate + D-glyceraldehyde 3-phosphate = D-erythrose 4-phosphate + beta-D-fructose 6-phosphate. It functions in the pathway carbohydrate degradation; pentose phosphate pathway; D-glyceraldehyde 3-phosphate and beta-D-fructose 6-phosphate from D-ribose 5-phosphate and D-xylulose 5-phosphate (non-oxidative stage): step 2/3. Its function is as follows. Transaldolase is important for the balance of metabolites in the pentose-phosphate pathway. The polypeptide is Transaldolase (Shewanella sp. (strain ANA-3)).